The sequence spans 301 residues: Acetylglutamate kinase (301 aa).

Residues 68–69, Arg90, and Asn195 each bind substrate; that span reads GG.

This sequence belongs to the acetylglutamate kinase family. ArgB subfamily.

The protein resides in the cytoplasm. The catalysed reaction is N-acetyl-L-glutamate + ATP = N-acetyl-L-glutamyl 5-phosphate + ADP. It functions in the pathway amino-acid biosynthesis; L-arginine biosynthesis; N(2)-acetyl-L-ornithine from L-glutamate: step 2/4. Catalyzes the ATP-dependent phosphorylation of N-acetyl-L-glutamate. The sequence is that of Acetylglutamate kinase from Pseudomonas putida (strain ATCC 700007 / DSM 6899 / JCM 31910 / BCRC 17059 / LMG 24140 / F1).